A 590-amino-acid chain; its full sequence is Probable lysosomal cobalamin transporter (590 aa).

The next 10 helical transmembrane spans lie at 8-28 (LIWV…SIFI), 46-66 (IFTL…VALV), 94-114 (AVAY…VVPF), 145-165 (TVAF…VPIG), 190-210 (ALTF…VLYT), 314-334 (LLSG…MLLT), 348-367 (CGYI…VFVH), 376-396 (YILF…GIAT), 421-441 (ITTV…SMVV), and 508-528 (FFGI…LLVF). The tract at residues 567–590 (WEDITGRASRSPQVSGSAGRGTRE) is disordered.

Belongs to the LIMR family. LMBRD1 subfamily.

It is found in the lysosome membrane. In terms of biological role, probable lysosomal cobalamin transporter. Required to export cobalamin from lysosomes allowing its conversion to cofactors. This is Probable lysosomal cobalamin transporter from Ajellomyces capsulatus (strain NAm1 / WU24) (Darling's disease fungus).